Consider the following 121-residue polypeptide: Ribosome-binding factor A (121 aa).

Belongs to the RbfA family. In terms of assembly, monomer. Binds 30S ribosomal subunits, but not 50S ribosomal subunits or 70S ribosomes.

It is found in the cytoplasm. Its function is as follows. One of several proteins that assist in the late maturation steps of the functional core of the 30S ribosomal subunit. Associates with free 30S ribosomal subunits (but not with 30S subunits that are part of 70S ribosomes or polysomes). Required for efficient processing of 16S rRNA. May interact with the 5'-terminal helix region of 16S rRNA. The protein is Ribosome-binding factor A of Finegoldia magna (strain ATCC 29328 / DSM 20472 / WAL 2508) (Peptostreptococcus magnus).